Consider the following 374-residue polypeptide: Ribosomal RNA large subunit methyltransferase G (374 aa).

It belongs to the methyltransferase superfamily. RlmG family.

It localises to the cytoplasm. It catalyses the reaction guanosine(1835) in 23S rRNA + S-adenosyl-L-methionine = N(2)-methylguanosine(1835) in 23S rRNA + S-adenosyl-L-homocysteine + H(+). Specifically methylates the guanine in position 1835 (m2G1835) of 23S rRNA. This chain is Ribosomal RNA large subunit methyltransferase G, found in Pseudomonas entomophila (strain L48).